The following is a 371-amino-acid chain: Neuropeptide Y receptor type 6 (371 aa).

Residues 1-31 are Extracellular-facing; sequence MEVSLNDPASNKTSAKSNSSAFFYFESCQSP. N-linked (GlcNAc...) asparagine glycosylation is found at N11 and N18. Residues 32-52 traverse the membrane as a helical segment; sequence SLALLLLLIAYTVVLIMGICG. The Cytoplasmic segment spans residues 53 to 72; the sequence is NLSLITIIFKKQREAQNVTN. The helical transmembrane segment at 73-93 threads the bilayer; it reads ILIANLSLSDILVCVMCIPFT. Residues 94-111 are Extracellular-facing; the sequence is AIYTLMDRWIFGNTMCKL. C109 and C196 are disulfide-bonded. A helical transmembrane segment spans residues 112-132; that stretch reads TSYVQSVSISVSIFSLVLIAI. Over 133-150 the chain is Cytoplasmic; it reads ERYQLIVNPRGWKPSASH. A helical membrane pass occupies residues 151 to 171; that stretch reads AYWGIMLIWLFSLLLSIPLLL. The Extracellular segment spans residues 172 to 213; that stretch reads SYHLTDEPFRNLSLPTDLYSHHVVCVEHWPSKTNQLLYSTSL. An N-linked (GlcNAc...) asparagine glycan is attached at N182. Residues 214–234 form a helical membrane-spanning segment; that stretch reads IMLQYFVPLGFMFICYLKIVI. The Cytoplasmic portion of the chain corresponds to 235 to 263; sequence CLHKRNSKIDRRRENESRLTENKRINTML. Residues 264–284 traverse the membrane as a helical segment; sequence ISIVVTFAACWLPLNTFNVIF. Residues 285-297 are Extracellular-facing; sequence DWYHEVLMSCHHD. Residues 298 to 318 traverse the membrane as a helical segment; it reads LVFAICHLVAMVSTCINPLFY. The Cytoplasmic portion of the chain corresponds to 319-371; sequence GFLNRNFQKDLVVLIHHCLCFALRERYENIAISTLHTDESKGSLRVAHIPAGI. C336 carries S-palmitoyl cysteine lipidation.

The protein belongs to the G-protein coupled receptor 1 family. As to expression, expressed in hippocampus, striatum, hypothalamus, cerebellum, small intestine, colon and adrenal gland.

The protein resides in the cell membrane. In terms of biological role, receptor for neuropeptide Y and peptide YY. The activity of this receptor is mediated by G proteins that inhibit adenylate cyclase activity. The polypeptide is Neuropeptide Y receptor type 6 (NPY6R) (Oryctolagus cuniculus (Rabbit)).